Consider the following 551-residue polypeptide: Arginine--tRNA ligase (551 aa).

Residues alanine 123–arginine 133 carry the 'HIGH' region motif.

It belongs to the class-I aminoacyl-tRNA synthetase family. In terms of assembly, monomer.

It localises to the cytoplasm. The catalysed reaction is tRNA(Arg) + L-arginine + ATP = L-arginyl-tRNA(Arg) + AMP + diphosphate. The protein is Arginine--tRNA ligase of Chlorobaculum tepidum (strain ATCC 49652 / DSM 12025 / NBRC 103806 / TLS) (Chlorobium tepidum).